The following is a 631-amino-acid chain: Polyadenylate-binding protein, cytoplasmic and nuclear (631 aa).

The interval 1-56 is disordered; it reads MSDLQESLEKLSINEKAPQAPADDATPSNTTTLEKESSESAAAAAGEGAGEEGEEA. RRM domains are found at residues 58–136, 146–223, 239–316, and 342–419; these read ASLY…WSQR, GNIF…KHVS, TNVY…RAQK, and VNLF…LAQR. The interval 518–545 is disordered; the sequence is GGEFNGPNGQRQQRGAYPPNRNQKGGRP. The 82-residue stretch at 545-626 folds into the PABC domain; sequence PQRDLAAIIS…ALTAFEEYKK (82 aa).

The protein belongs to the polyadenylate-binding protein type-1 family.

It is found in the cytoplasm. It localises to the nucleus. In terms of biological role, binds the poly(A) tail of mRNA. Appears to be an important mediator of the multiple roles of the poly(A) tail in mRNA biogenesis, stability and translation. In the nucleus, involved in both mRNA cleavage and polyadenylation. Is also required for efficient mRNA export to the cytoplasm. Acts in concert with a poly(A)-specific nuclease (PAN) to affect poly(A) tail shortening, which may occur concomitantly with either nucleocytoplasmic mRNA transport or translational initiation. In the cytoplasm, stimulates translation initiation and regulates mRNA decay through translation termination-coupled poly(A) shortening, probably mediated by PAN. The protein is Polyadenylate-binding protein, cytoplasmic and nuclear (PAB1) of Meyerozyma guilliermondii (strain ATCC 6260 / CBS 566 / DSM 6381 / JCM 1539 / NBRC 10279 / NRRL Y-324) (Yeast).